We begin with the raw amino-acid sequence, 237 residues long: Lipoprotein-releasing system ATP-binding protein LolD (237 aa).

The 229-residue stretch at 8 to 236 folds into the ABC transporter domain; it reads ISVTDLRKTF…EAIKKSVKTA (229 aa). 40–47 serves as a coordination point for ATP; it reads GKSGSGKS.

This sequence belongs to the ABC transporter superfamily. Lipoprotein translocase (TC 3.A.1.125) family. The complex is composed of two ATP-binding proteins (LolD) and two transmembrane proteins (LolC and LolE).

It is found in the cell inner membrane. Part of the ABC transporter complex LolCDE involved in the translocation of mature outer membrane-directed lipoproteins, from the inner membrane to the periplasmic chaperone, LolA. Responsible for the formation of the LolA-lipoprotein complex in an ATP-dependent manner. In Leptospira interrogans serogroup Icterohaemorrhagiae serovar Lai (strain 56601), this protein is Lipoprotein-releasing system ATP-binding protein LolD.